The chain runs to 535 residues: CTP synthase (535 aa).

The segment at 1 to 268 is amidoligase domain; it reads MSTKYIFVTG…DQIVCDHLKL (268 aa). Residue Ser-14 participates in CTP binding. Ser-14 is a UTP binding site. 15–20 is a binding site for ATP; sequence SMGKGI. Residue Tyr-55 coordinates L-glutamine. Asp-72 contributes to the ATP binding site. Mg(2+) is bound by residues Asp-72 and Glu-142. CTP contacts are provided by residues 149-151, 189-194, and Lys-225; these read DME and KTKIAQ. UTP is bound by residues 189–194 and Lys-225; that span reads KTKIAQ. Val-243 serves as a coordination point for ATP. In terms of domain architecture, Glutamine amidotransferase type-1 spans 293-535; the sequence is KIALVGKYVE…FIRVAVENSK (243 aa). Gly-355 provides a ligand contact to L-glutamine. The active-site Nucleophile; for glutamine hydrolysis is the Cys-382. Residues 383–386, Glu-406, and Arg-464 each bind L-glutamine; that span reads LGMQ. Residues His-509 and Glu-511 contribute to the active site.

This sequence belongs to the CTP synthase family. Homotetramer. In contrast to E.coli CTP synthase, remains a tetramer at dilute enzyme concentrations even in the absence of Mg(2+), ATP and UTP.

It catalyses the reaction UTP + L-glutamine + ATP + H2O = CTP + L-glutamate + ADP + phosphate + 2 H(+). The catalysed reaction is L-glutamine + H2O = L-glutamate + NH4(+). The enzyme catalyses UTP + NH4(+) + ATP = CTP + ADP + phosphate + 2 H(+). It participates in pyrimidine metabolism; CTP biosynthesis via de novo pathway; CTP from UDP: step 2/2. Its activity is regulated as follows. Allosterically activated by GTP, when glutamine is the substrate. GTP has no effect on the reaction when ammonia is the substrate. The allosteric effector GTP functions by stabilizing the protein conformation that binds the tetrahedral intermediate(s) formed during glutamine hydrolysis. Also activated by magnesium. Allosterically inhibited by CTP. Functionally, catalyzes the ATP-dependent amination of UTP to CTP with either L-glutamine or ammonia as the source of nitrogen. Is essential for the synthesis of CTP de novo. Contrary to other bacterial CTP synthases, the lactococcal enzyme is also able to convert dUTP to dCTP, but this reaction may not play a significant physiological role. Regulates intracellular CTP levels through interactions with the four ribonucleotide triphosphates. In Lactococcus lactis subsp. cremoris (strain MG1363), this protein is CTP synthase.